The chain runs to 593 residues: Myc box-dependent-interacting protein 1 (593 aa).

An N-acetylalanine modification is found at Ala2. An interaction with BIN2 region spans residues 2 to 122; it reads AEMGSKGVTA…DYHQKLVDQA (121 aa). 2 coiled-coil regions span residues 15-42 and 193-267; these read ASNVQKKLTRAQEKVLQKLGKADETKDE and HLVA…NDVL. In terms of domain architecture, BAR spans 29-276; that stretch reads VLQKLGKADE…LVGLEKQHGS (248 aa). Disordered stretches follow at residues 280–354 and 400–488; these read TVKA…KEVK and PVTS…AASS. Ser296, Ser298, and Ser303 each carry phosphoserine. Phosphothreonine occurs at positions 307 and 323. At Ser331 the chain carries Phosphoserine. The tract at residues 378–421 is clathrin-binding; sequence FEAPGPFSEQASLLDLDFDPLPPVTSPVKAPTPSGQSIPWDLWE. Positions 520-593 constitute an SH3 domain; sequence GFMFKVQAQH…FPENFTERVP (74 aa).

In terms of assembly, heterodimer with AMPH. Binds SH3GLB1. Interacts (via SH3 domain) with DNM1. Interacts with SYNJ1. Interacts (via SH3 domain) with DNM2. Isoform IIA interacts with CLTC. Isoform IIB does not interact with CLTC. Isoform IIC1 does not interact with CLTC. Isoform IIC2 does not interact with CLTC. Interacts with AP2A2. Interacts with AP2B1. Interacts with MYC (via N-terminal transactivation domain); the interaction requires the integrity of the conserved MYC box regions 1 and 2. Interacts with BIN2. Interacts with SNX4. Interacts (via BAR domain) with BACE1. Binds (via BAR domain) F-actin. As to quaternary structure, (Microbial infection) Interacts (SH3 domain) with HCV NS5A. In terms of processing, phosphorylated by protein kinase C. Ubiquitous. Highest expression in the brain and muscle. Expressed in oligodendrocytes. Isoform IIA is expressed only in the brain, where it is detected in the gray matter, but not in the white matter. Isoform BIN1 is widely expressed with highest expression in skeletal muscle.

The protein localises to the nucleus. The protein resides in the cytoplasm. It localises to the endosome. It is found in the cell membrane. Its subcellular location is the sarcolemma. The protein localises to the T-tubule. Its function is as follows. Is a key player in the control of plasma membrane curvature, membrane shaping and membrane remodeling. Required in muscle cells for the formation of T-tubules, tubular invaginations of the plasma membrane that function in depolarization-contraction coupling. Is a negative regulator of endocytosis. Is also involved in the regulation of intracellular vesicles sorting, modulation of BACE1 trafficking and the control of amyloid-beta production. In neuronal circuits, endocytosis regulation may influence the internalization of PHF-tau aggregates. May be involved in the regulation of MYC activity and the control cell proliferation. Has actin bundling activity and stabilizes actin filaments against depolymerization in vitro. The chain is Myc box-dependent-interacting protein 1 (BIN1) from Homo sapiens (Human).